We begin with the raw amino-acid sequence, 39 residues long: SPbeta prophage-derived uncharacterized protein YorT (39 aa).

This chain is SPbeta prophage-derived uncharacterized protein YorT (yorT), found in Bacillus subtilis (strain 168).